The sequence spans 522 residues: Putative cysteine ligase BshC (522 aa).

A coiled-coil region spans residues 436–469 (SWAQAEKAKALKQLEDIEKKLRKAEERKHDDVIK).

The protein belongs to the BshC family.

This Cytophaga hutchinsonii (strain ATCC 33406 / DSM 1761 / CIP 103989 / NBRC 15051 / NCIMB 9469 / D465) protein is Putative cysteine ligase BshC.